Here is a 363-residue protein sequence, read N- to C-terminus: 3-methyl-D-ornithine--L-lysine ligase (363 aa).

Position 10 (Lys-10) interacts with ATP. 11–12 (LQ) is a binding site for L-lysine. ATP contacts are provided by residues Asp-31, 49–50 (DV), and 72–73 (EN). Glu-72 lines the L-lysine pocket. Residues Lys-104, Lys-131, Ser-138, and 160–163 (EEYV) each bind ADP. Residues 169–171 (SLE) and Asp-225 contribute to the D-ornithine site. 3 residues coordinate Mg(2+): Glu-227, Glu-239, and Asp-241. Glu-239 contacts ADP. D-ornithine is bound by residues 243 to 248 (RFPSQT) and Glu-302. Ser-246 and Glu-302 together coordinate L-lysine.

Belongs to the PylC family. Mg(2+) is required as a cofactor.

The enzyme catalyses (3R)-3-methyl-D-ornithine + L-lysine + ATP = (3R)-3-methyl-D-ornithyl-N(6)-L-lysine + ADP + phosphate + H(+). The protein operates within amino-acid biosynthesis; L-pyrrolysine biosynthesis. Is required for the biosynthesis of pyrrolysine. Catalyzes the ATP-dependent ligation between (3R)-3-methyl-D-ornithine and L-lysine, leading to (3R)-3-methyl-D-ornithyl-N6-L-lysine. The sequence is that of 3-methyl-D-ornithine--L-lysine ligase from Methanosarcina barkeri (strain Fusaro / DSM 804).